The primary structure comprises 115 residues: Large ribosomal subunit protein uL22 (115 aa).

This sequence belongs to the universal ribosomal protein uL22 family. Part of the 50S ribosomal subunit.

This protein binds specifically to 23S rRNA; its binding is stimulated by other ribosomal proteins, e.g. L4, L17, and L20. It is important during the early stages of 50S assembly. It makes multiple contacts with different domains of the 23S rRNA in the assembled 50S subunit and ribosome. Its function is as follows. The globular domain of the protein is located near the polypeptide exit tunnel on the outside of the subunit, while an extended beta-hairpin is found that lines the wall of the exit tunnel in the center of the 70S ribosome. In Lactiplantibacillus plantarum (strain ATCC BAA-793 / NCIMB 8826 / WCFS1) (Lactobacillus plantarum), this protein is Large ribosomal subunit protein uL22.